The following is a 484-amino-acid chain: UDP-N-acetylmuramate--L-alanine ligase (484 aa).

124–130 is an ATP binding site; the sequence is GTHGKTT.

This sequence belongs to the MurCDEF family.

It localises to the cytoplasm. The enzyme catalyses UDP-N-acetyl-alpha-D-muramate + L-alanine + ATP = UDP-N-acetyl-alpha-D-muramoyl-L-alanine + ADP + phosphate + H(+). It participates in cell wall biogenesis; peptidoglycan biosynthesis. Cell wall formation. In Pseudoalteromonas atlantica (strain T6c / ATCC BAA-1087), this protein is UDP-N-acetylmuramate--L-alanine ligase.